A 60-amino-acid chain; its full sequence is MAVPRNRHSNARKNIRRSHHAKQARHAAVCNNCKQAFIPHTVCTSCGFYNGKAVMTVEKK.

The tract at residues 1–23 (MAVPRNRHSNARKNIRRSHHAKQ) is disordered.

Belongs to the bacterial ribosomal protein bL32 family.

In Chlamydia abortus (strain DSM 27085 / S26/3) (Chlamydophila abortus), this protein is Large ribosomal subunit protein bL32.